A 260-amino-acid chain; its full sequence is Proteasome subunit alpha (260 aa).

It belongs to the peptidase T1A family. In terms of assembly, the 20S proteasome core is composed of 14 alpha and 14 beta subunits that assemble into four stacked heptameric rings, resulting in a barrel-shaped structure. The two inner rings, each composed of seven catalytic beta subunits, are sandwiched by two outer rings, each composed of seven alpha subunits. The catalytic chamber with the active sites is on the inside of the barrel. Has a gated structure, the ends of the cylinder being occluded by the N-termini of the alpha-subunits. Is capped at one or both ends by the proteasome regulatory ATPase, PAN.

It is found in the cytoplasm. The formation of the proteasomal ATPase PAN-20S proteasome complex, via the docking of the C-termini of PAN into the intersubunit pockets in the alpha-rings, triggers opening of the gate for substrate entry. Interconversion between the open-gate and close-gate conformations leads to a dynamic regulation of the 20S proteasome proteolysis activity. Component of the proteasome core, a large protease complex with broad specificity involved in protein degradation. The protein is Proteasome subunit alpha of Thermococcus onnurineus (strain NA1).